The primary structure comprises 155 residues: Small ribosomal subunit protein uS7 (155 aa).

The protein belongs to the universal ribosomal protein uS7 family. As to quaternary structure, part of the 30S ribosomal subunit. Contacts proteins S9 and S11.

Its function is as follows. One of the primary rRNA binding proteins, it binds directly to 16S rRNA where it nucleates assembly of the head domain of the 30S subunit. Is located at the subunit interface close to the decoding center, probably blocks exit of the E-site tRNA. The protein is Small ribosomal subunit protein uS7 of Mesoplasma florum (strain ATCC 33453 / NBRC 100688 / NCTC 11704 / L1) (Acholeplasma florum).